The following is a 375-amino-acid chain: Probable cytochrome c oxidase subunit 2 (375 aa).

The next 3 membrane-spanning stretches (helical) occupy residues 36–56, 80–100, and 122–142; these read LAVS…DNVW, IIAA…TVVF, and LTYT…TVVV. 4 residues coordinate Cu cation: H264, C305, C309, and H313. The span at 353-363 shows a compositional bias: polar residues; that stretch reads VATSTRPFNTD. The tract at residues 353–375 is disordered; that stretch reads VATSTRPFNTDRTVKSAAAPEAE.

The protein belongs to the cytochrome c oxidase subunit 2 family. Requires Cu cation as cofactor. The cofactor is heme.

The protein localises to the cell membrane. The catalysed reaction is 4 Fe(II)-[cytochrome c] + O2 + 8 H(+)(in) = 4 Fe(III)-[cytochrome c] + 2 H2O + 4 H(+)(out). Functionally, subunits I and II form the functional core of the enzyme complex. Electrons originating in cytochrome c are transferred via heme a and Cu(A) to the binuclear center formed by heme a3 and Cu(B). The chain is Probable cytochrome c oxidase subunit 2 (ctaC) from Nocardia farcinica (strain IFM 10152).